The sequence spans 156 residues: Small ribosomal subunit protein uS7 (156 aa).

This sequence belongs to the universal ribosomal protein uS7 family. As to quaternary structure, part of the 30S ribosomal subunit. Contacts proteins S9 and S11.

Its function is as follows. One of the primary rRNA binding proteins, it binds directly to 16S rRNA where it nucleates assembly of the head domain of the 30S subunit. Is located at the subunit interface close to the decoding center, probably blocks exit of the E-site tRNA. This chain is Small ribosomal subunit protein uS7, found in Pediococcus pentosaceus (strain ATCC 25745 / CCUG 21536 / LMG 10740 / 183-1w).